Consider the following 282-residue polypeptide: Kallikrein-11 (282 aa).

An N-terminal signal peptide occupies residues 1-50 (MQRLRWLRDWKSSGRGLTAAKEPGARSSPLQAMRILQLILLALATGLVGG). The propeptide at 51-53 (ETR) is activation peptide. A Peptidase S1 domain is found at 53–280 (RIIKGFECKP…YVDWIQETMK (228 aa)). Intrachain disulfides connect Cys60–Cys195, Cys79–Cys95, Cys167–Cys269, Cys174–Cys241, Cys206–Cys220, and Cys231–Cys256. His94 functions as the Charge relay system in the catalytic mechanism. An N-linked (GlcNAc...) asparagine glycan is attached at Asn131. Catalysis depends on Asp142, which acts as the Charge relay system. Residues Asn197 and Asn213 are each glycosylated (N-linked (GlcNAc...) asparagine). Catalysis depends on Ser235, which acts as the Charge relay system. N-linked (GlcNAc...) asparagine glycosylation occurs at Asn242.

This sequence belongs to the peptidase S1 family. Kallikrein subfamily. Post-translationally, about 40% of KLK11 is inactivated by internal cleavage after Arg-188. This proteolytic inactivation may be effected by plasminogen. Expressed in brain, skin and prostate. Isoform 1 is expressed preferentially in brain. Isoform 2 is expressed in prostate. Present in seminal plasma at concentrations ranging from 2 to 37 microg/mL (at protein level).

The protein localises to the secreted. Its subcellular location is the golgi apparatus. Possible multifunctional protease. Efficiently cleaves 'bz-Phe-Arg-4-methylcoumaryl-7-amide', a kallikrein substrate, and weakly cleaves other substrates for kallikrein and trypsin. Cleaves synthetic peptides after arginine but not lysine residues. This chain is Kallikrein-11 (KLK11), found in Homo sapiens (Human).